The following is a 175-amino-acid chain: Large ribosomal subunit protein uL5 (175 aa).

This sequence belongs to the universal ribosomal protein uL5 family. As to quaternary structure, part of the 50S ribosomal subunit; contacts the 5S rRNA and probably tRNA. Forms a bridge to the 30S subunit in the 70S ribosome.

In terms of biological role, this is one of the proteins that bind and probably mediate the attachment of the 5S RNA into the large ribosomal subunit, where it forms part of the central protuberance. In the 70S ribosome it contacts protein S13 of the 30S subunit (bridge B1b), connecting the 2 subunits; this bridge is implicated in subunit movement. May contact the P site tRNA; the 5S rRNA and some of its associated proteins might help stabilize positioning of ribosome-bound tRNAs. The protein is Large ribosomal subunit protein uL5 of Halobacterium salinarum (strain ATCC 29341 / DSM 671 / R1).